A 367-amino-acid chain; its full sequence is GDSL esterase/lipase At4g28780 (367 aa).

The signal sequence occupies residues 1 to 28 (MSTFLLTWIIMTVALSVTLFLMPQQTNA). Ser38 serves as the catalytic Nucleophile. Asn119 is a glycosylation site (N-linked (GlcNAc...) asparagine). Active-site residues include Asp328 and His331. The N-linked (GlcNAc...) asparagine glycan is linked to Asn356.

This sequence belongs to the 'GDSL' lipolytic enzyme family.

It localises to the secreted. The protein is GDSL esterase/lipase At4g28780 of Arabidopsis thaliana (Mouse-ear cress).